The following is a 201-amino-acid chain: MAIGYPNGKKYAASHEGIPQKKRKAPVTYGKRGMSLEDDLNDTIAYYLAQDIAVIHKKPTPVQIVSVDYPKRSSAKIKEAYFKTPSTTDYNGVYKGKYIDFEAKETQNTTSFPLSNFHDHQMIHMANVLKQDGIVFVIIAFQKIGETYFIPFEKFYPFWQRMQSGGRKSVTIAEIQDVSDQIPYGLNPRLDFLKSIEKLYF.

Positions 87, 89, 102, and 121 each coordinate Mg(2+).

The protein belongs to the RecU family. The cofactor is Mg(2+).

Its subcellular location is the cytoplasm. It carries out the reaction Endonucleolytic cleavage at a junction such as a reciprocal single-stranded crossover between two homologous DNA duplexes (Holliday junction).. In terms of biological role, endonuclease that resolves Holliday junction intermediates in genetic recombination. Cleaves mobile four-strand junctions by introducing symmetrical nicks in paired strands. Promotes annealing of linear ssDNA with homologous dsDNA. Required for DNA repair, homologous recombination and chromosome segregation. This chain is Holliday junction resolvase RecU, found in Listeria welshimeri serovar 6b (strain ATCC 35897 / DSM 20650 / CCUG 15529 / CIP 8149 / NCTC 11857 / SLCC 5334 / V8).